We begin with the raw amino-acid sequence, 345 residues long: D-fructose 1,6-bisphosphatase class 2/sedoheptulose 1,7-bisphosphatase (345 aa).

4 residues coordinate Mn(2+): Asp33, Glu57, Asp97, and Glu100. Substrate contacts are provided by residues 100–102 (EGT), Tyr131, 176–178 (RPR), and 198–200 (DGD). Residue Glu225 participates in Mn(2+) binding.

Belongs to the FBPase class 2 family. Homotetramer. Mn(2+) serves as cofactor.

It carries out the reaction beta-D-fructose 1,6-bisphosphate + H2O = beta-D-fructose 6-phosphate + phosphate. It catalyses the reaction D-sedoheptulose 1,7-bisphosphate + H2O = D-sedoheptulose 7-phosphate + phosphate. It participates in carbohydrate biosynthesis; Calvin cycle. In terms of biological role, catalyzes the hydrolysis of fructose 1,6-bisphosphate (Fru 1,6-P2) and sedoheptulose 1,7-bisphosphate (Sed 1,7-P2) to fructose 6-phosphate and sedoheptulose 7-phosphate, respectively. The protein is D-fructose 1,6-bisphosphatase class 2/sedoheptulose 1,7-bisphosphatase of Microcystis aeruginosa (strain NIES-843 / IAM M-2473).